We begin with the raw amino-acid sequence, 1045 residues long: Bifunctional glutamine synthetase adenylyltransferase/adenylyl-removing enzyme (1045 aa).

An adenylyl removase region spans residues 1 to 527 (MSGPLRSERK…LHSQLFYRPL (527 aa)). Positions 533 to 1045 (NLSADAIRLS…GVDSMEQREF (513 aa)) are adenylyl transferase.

It belongs to the GlnE family. It depends on Mg(2+) as a cofactor.

It catalyses the reaction [glutamine synthetase]-O(4)-(5'-adenylyl)-L-tyrosine + phosphate = [glutamine synthetase]-L-tyrosine + ADP. The catalysed reaction is [glutamine synthetase]-L-tyrosine + ATP = [glutamine synthetase]-O(4)-(5'-adenylyl)-L-tyrosine + diphosphate. Involved in the regulation of glutamine synthetase GlnA, a key enzyme in the process to assimilate ammonia. When cellular nitrogen levels are high, the C-terminal adenylyl transferase (AT) inactivates GlnA by covalent transfer of an adenylyl group from ATP to specific tyrosine residue of GlnA, thus reducing its activity. Conversely, when nitrogen levels are low, the N-terminal adenylyl removase (AR) activates GlnA by removing the adenylyl group by phosphorolysis, increasing its activity. The regulatory region of GlnE binds the signal transduction protein PII (GlnB) which indicates the nitrogen status of the cell. This is Bifunctional glutamine synthetase adenylyltransferase/adenylyl-removing enzyme from Corynebacterium glutamicum (strain ATCC 13032 / DSM 20300 / JCM 1318 / BCRC 11384 / CCUG 27702 / LMG 3730 / NBRC 12168 / NCIMB 10025 / NRRL B-2784 / 534).